A 417-amino-acid polypeptide reads, in one-letter code: Peptide chain release factor subunit 1 (417 aa).

This sequence belongs to the eukaryotic release factor 1 family. Heterodimer of two subunits, one of which binds GTP.

The protein resides in the cytoplasm. Functionally, directs the termination of nascent peptide synthesis (translation) in response to the termination codons UAA, UAG and UGA. The sequence is that of Peptide chain release factor subunit 1 (prf1) from Thermoplasma acidophilum (strain ATCC 25905 / DSM 1728 / JCM 9062 / NBRC 15155 / AMRC-C165).